The chain runs to 735 residues: Catalase-peroxidase (735 aa).

The span at 1–26 (MENQNRQNASQCPFHGSITNQSSNRT) shows a compositional bias: polar residues. The interval 1-29 (MENQNRQNASQCPFHGSITNQSSNRTTNK) is disordered. The segment at residues 100 to 223 (WHSAGTYRIG…LAASVMGLIY (124 aa)) is a cross-link (tryptophyl-tyrosyl-methioninium (Trp-Tyr) (with M-249)). The active-site Proton acceptor is the His101. The segment at residues 223 to 249 (YVNPEGPDGKPDPKAAARDIRETFRRM) is a cross-link (tryptophyl-tyrosyl-methioninium (Tyr-Met) (with W-100)). His264 provides a ligand contact to heme b.

This sequence belongs to the peroxidase family. Peroxidase/catalase subfamily. Homodimer or homotetramer. Heme b serves as cofactor. In terms of processing, formation of the three residue Trp-Tyr-Met cross-link is important for the catalase, but not the peroxidase activity of the enzyme.

The enzyme catalyses H2O2 + AH2 = A + 2 H2O. The catalysed reaction is 2 H2O2 = O2 + 2 H2O. Bifunctional enzyme with both catalase and broad-spectrum peroxidase activity. The chain is Catalase-peroxidase from Geobacillus thermodenitrificans (strain NG80-2).